The sequence spans 365 residues: Protein-glutamate methylesterase/protein-glutamine glutaminase 2 (365 aa).

The 118-residue stretch at 18 to 135 (RVLIVDDSAM…GQGLPAIMRD (118 aa)) folds into the Response regulatory domain. The residue at position 69 (aspartate 69) is a 4-aspartylphosphate. The region spanning 162–355 (GASEDWIHAL…ARMMLAAAAD (194 aa)) is the CheB-type methylesterase domain. Catalysis depends on residues serine 174, histidine 200, and aspartate 297.

This sequence belongs to the CheB family. In terms of processing, phosphorylated by CheA. Phosphorylation of the N-terminal regulatory domain activates the methylesterase activity.

The protein resides in the cytoplasm. The enzyme catalyses [protein]-L-glutamate 5-O-methyl ester + H2O = L-glutamyl-[protein] + methanol + H(+). The catalysed reaction is L-glutaminyl-[protein] + H2O = L-glutamyl-[protein] + NH4(+). Its function is as follows. Involved in chemotaxis. Part of a chemotaxis signal transduction system that modulates chemotaxis in response to various stimuli. Catalyzes the demethylation of specific methylglutamate residues introduced into the chemoreceptors (methyl-accepting chemotaxis proteins or MCP) by CheR. Also mediates the irreversible deamidation of specific glutamine residues to glutamic acid. The chain is Protein-glutamate methylesterase/protein-glutamine glutaminase 2 from Cereibacter sphaeroides (strain ATCC 17023 / DSM 158 / JCM 6121 / CCUG 31486 / LMG 2827 / NBRC 12203 / NCIMB 8253 / ATH 2.4.1.) (Rhodobacter sphaeroides).